We begin with the raw amino-acid sequence, 283 residues long: uncharacterized protein (283 aa).

Over residues 1 to 10 the composition is skewed to polar residues; it reads MELNKTSESL. 2 disordered regions span residues 1–99 and 255–283; these read MELN…NPTS and DQEG…EAHI. 3 stretches are compositionally biased toward basic and acidic residues: residues 14–34, 42–53, and 61–71; these read KIDH…REVR, SSTRQEKADRMP, and ESSKGSEEGAV.

The protein belongs to the chlamydial CPn_0705/CT_671/TC_0042 family.

This is an uncharacterized protein from Chlamydia trachomatis serovar D (strain ATCC VR-885 / DSM 19411 / UW-3/Cx).